The sequence spans 202 residues: Nucleoside triphosphate pyrophosphatase (202 aa).

Asp-79 (proton acceptor) is an active-site residue.

This sequence belongs to the Maf family. A divalent metal cation serves as cofactor.

The protein resides in the cytoplasm. It carries out the reaction a ribonucleoside 5'-triphosphate + H2O = a ribonucleoside 5'-phosphate + diphosphate + H(+). The enzyme catalyses a 2'-deoxyribonucleoside 5'-triphosphate + H2O = a 2'-deoxyribonucleoside 5'-phosphate + diphosphate + H(+). Functionally, nucleoside triphosphate pyrophosphatase. May have a dual role in cell division arrest and in preventing the incorporation of modified nucleotides into cellular nucleic acids. This is Nucleoside triphosphate pyrophosphatase from Nitrobacter winogradskyi (strain ATCC 25391 / DSM 10237 / CIP 104748 / NCIMB 11846 / Nb-255).